The following is a 344-amino-acid chain: MIKKFSNMDYNQKRERCGQYIEALEEERRKIHVFQRELPLCLDLVTQAIEACKRELPEMTTENMYGQPECSEQTTGECGPVLEQFLTIKDSSTSNEEEDEEFDDEHGNHDPDNDSEDKNTKSDWLKSVQLWNQPDHPLLPKEERLQQETMTRDESMRKDPMVNGGEGRKREAEKDGGGGRKQRRCWSSQLHRRFLNALQHLGGPHVATPKQIREFMKVDGLTNDEVKSHLQKYRLHTRRPRQTVPNNGNSQTQHFVVVGGLWVPQSDYSTGKTTGGATTSSTTTTTGIYGTMAAPPPPQWPSHSNYRPSIIVDEGSGSHSEGVVVRCSSPAMSSSTRNHYVKNN.

The tract at residues 88–184 (IKDSSTSNEE…DGGGGRKQRR (97 aa)) is disordered. Residues 95-104 (NEEEDEEFDD) show a composition bias toward acidic residues. Composition is skewed to basic and acidic residues over residues 105–124 (EHGNHDPDNDSEDKNTKSDW) and 138–178 (LLPK…DGGG). The 61-residue stretch at 178 to 238 (GGRKQRRCWS…HLQKYRLHTR (61 aa)) folds into the HTH myb-type domain. A DNA-binding region (H-T-H motif) is located at residues 209–234 (PKQIREFMKVDGLTNDEVKSHLQKYR). Residues 269-291 (STGKTTGGATTSSTTTTTGIYGT) are compositionally biased toward low complexity. The tract at residues 269–322 (STGKTTGGATTSSTTTTTGIYGTMAAPPPPQWPSHSNYRPSIIVDEGSGSHSEG) is disordered.

Expressed in the root hair region and root hair cells.

It localises to the nucleus. Functionally, transcription factor involved in nitrate and phosphate signaling in roots. Integrates nitrate and phosphate starvation responses and adaptation of root architecture depending on nutrient availabilities. Acts downstream of the nitrate sensor and transporter NPF6.3/NRT1.1. Represses primary root development in response to phosphate deficiency conditions, only when nitrate is present. Involved in the modulation of primary root and root hair growth in phosphate-deprived environment. May be required for suppressing abscisic acid (ABA) signaling in germinating embryo axis, which promotes the timely germination of seeds. This is Transcription factor HRS1 from Arabidopsis thaliana (Mouse-ear cress).